The sequence spans 60 residues: Large ribosomal subunit protein bL32 (60 aa).

Residues 1-20 are compositionally biased toward basic residues; the sequence is MACPKKKTSKSKRSMRRAAW. The tract at residues 1–22 is disordered; sequence MACPKKKTSKSKRSMRRAAWKR.

It belongs to the bacterial ribosomal protein bL32 family.

The protein is Large ribosomal subunit protein bL32 of Thermosynechococcus vestitus (strain NIES-2133 / IAM M-273 / BP-1).